A 42-amino-acid chain; its full sequence is Putative protein RNF216-like (42 aa).

This chain is Putative protein RNF216-like (RNF216P1), found in Homo sapiens (Human).